The primary structure comprises 301 residues: Probable alpha-L-glutamate ligase (301 aa).

Residues 104 to 287 (LQLLSRKGVG…IAGMVIDFIE (184 aa)) enclose the ATP-grasp domain. ATP is bound by residues K141, 178–179 (EY), D187, and 211–213 (RSN). Residues D248, E260, and N262 each contribute to the Mg(2+) site. Mn(2+) is bound by residues D248, E260, and N262.

The protein belongs to the RimK family. Mg(2+) is required as a cofactor. Mn(2+) serves as cofactor.

The protein is Probable alpha-L-glutamate ligase of Pseudoalteromonas translucida (strain TAC 125).